Consider the following 252-residue polypeptide: Hydroxyacylglutathione hydrolase (252 aa).

His54, His56, Asp58, His59, His111, Asp128, and His166 together coordinate Zn(2+).

It belongs to the metallo-beta-lactamase superfamily. Glyoxalase II family. In terms of assembly, monomer. Requires Zn(2+) as cofactor.

It carries out the reaction an S-(2-hydroxyacyl)glutathione + H2O = a 2-hydroxy carboxylate + glutathione + H(+). Its pathway is secondary metabolite metabolism; methylglyoxal degradation; (R)-lactate from methylglyoxal: step 2/2. Thiolesterase that catalyzes the hydrolysis of S-D-lactoyl-glutathione to form glutathione and D-lactic acid. This is Hydroxyacylglutathione hydrolase from Vibrio vulnificus (strain CMCP6).